The following is a 120-amino-acid chain: Large ribosomal subunit protein uL18 (120 aa).

The protein belongs to the universal ribosomal protein uL18 family. Part of the 50S ribosomal subunit; part of the 5S rRNA/L5/L18/L25 subcomplex. Contacts the 5S and 23S rRNAs.

This is one of the proteins that bind and probably mediate the attachment of the 5S RNA into the large ribosomal subunit, where it forms part of the central protuberance. The polypeptide is Large ribosomal subunit protein uL18 (Halalkalibacterium halodurans (strain ATCC BAA-125 / DSM 18197 / FERM 7344 / JCM 9153 / C-125) (Bacillus halodurans)).